Consider the following 125-residue polypeptide: Fluoride-specific ion channel FluC (125 aa).

A run of 4 helical transmembrane segments spans residues Met-1–Val-21, Ala-32–Ala-52, Leu-68–Ile-88, and Ile-101–Met-121. Na(+)-binding residues include Gly-75 and Thr-78.

This sequence belongs to the fluoride channel Fluc/FEX (TC 1.A.43) family.

It is found in the cell inner membrane. The enzyme catalyses fluoride(in) = fluoride(out). With respect to regulation, na(+) is not transported, but it plays an essential structural role and its presence is essential for fluoride channel function. Fluoride-specific ion channel. Important for reducing fluoride concentration in the cell, thus reducing its toxicity. The polypeptide is Fluoride-specific ion channel FluC (Rhizobium leguminosarum bv. trifolii (strain WSM2304)).